Consider the following 264-residue polypeptide: MLAQQQPPTPTPTPQQSQPQPQPQPQPQQMSQSRKSKSKKKQSYYDEEVRTLPSGAPVDFGHGKKSTSKPKSKSKPASSSTTNFKLTASPSLPSGAKPNFQPYKSTSPSPPPPPPPSTQPSTSTSTSPTPRTSTGNKNHHNRHQSNHSDYDNDHPQLSLPNGKKPNFFNNNNNDKKFSTIPFDSSINLIRKQYNNPNTKAIKEKKLDNNNNNNSSNNSNNSNNSNSAYYAGSSFHSSPDALNLPKPSFKSNNGSPRQSSGLRDY.

Disordered stretches follow at residues 1–180 (MLAQ…FSTI) and 193–264 (YNNP…LRDY). Basic residues predominate over residues 63–74 (GKKSTSKPKSKS). Polar residues predominate over residues 83-92 (NFKLTASPSL). Residues 108-118 (PSPPPPPPPST) are compositionally biased toward pro residues. Low complexity-rich tracts occupy residues 119–134 (QPSTSTSTSPTPRTST), 161–172 (NGKKPNFFNNNN), and 208–226 (NNNNNNSSNNSNNSNNSNS). A compositionally biased stretch (polar residues) spans 248-264 (FKSNNGSPRQSSGLRDY).

This sequence belongs to the EDC family.

The protein localises to the cytoplasm. Functionally, mRNA-binding protein which stimulates mRNA decapping. This is Enhancer of mRNA-decapping protein 1 (EDC1) from Candida albicans (strain SC5314 / ATCC MYA-2876) (Yeast).